The primary structure comprises 102 residues: uncharacterized protein (102 aa).

Functionally, essential for virus function. This is an uncharacterized protein from Saccharolobus solfataricus (Sulfolobus solfataricus).